We begin with the raw amino-acid sequence, 173 residues long: Propanediol dehydratase small subunit (173 aa).

The protein belongs to the diol/glycerol dehydratase small subunit family. In terms of assembly, the propanediol dehydratase enzyme is a heterotrimeric complex composed of a large (PduC), a medium (PduD) and a small (PduE) subunit. Requires adenosylcob(III)alamin as cofactor.

The protein resides in the bacterial microcompartment. The catalysed reaction is propane-1,2-diol = propanal + H2O. It functions in the pathway polyol metabolism; 1,2-propanediol degradation. Inhibited by glycerol. Its function is as follows. Part of the PduCDE complex that catalyzes the dehydration of 1,2-propanediol (1,2-PD) to propionaldehyde. Required for S.typhimurium growth on 1,2-PD as the sole carbon and energy source. Localized in the bacterial microcompartment (BMC) dedicated to 1,2-PD degradation. The 1,2-PD-specific bacterial microcompartment (BMC) concentrates low levels of 1,2-PD catabolic enzymes, concentrates volatile reaction intermediates thus enhancing pathway flux and keeps the level of toxic, mutagenic propionaldehyde low. The polypeptide is Propanediol dehydratase small subunit (Salmonella typhimurium (strain LT2 / SGSC1412 / ATCC 700720)).